Consider the following 117-residue polypeptide: Ig heavy chain V region 5-84 (117 aa).

Residues 1–19 form the signal peptide; the sequence is MNFGLSLIFLVLVLKGVLC. The segment at 20 to 49 is framework-1; sequence EVKLVESGGGLVQPGGSLKLSCAASGFTFS. Cys41 and Cys115 are joined by a disulfide. Residues 50 to 54 form a complementarity-determining-1 region; that stretch reads SYTMS. The interval 55–68 is framework-2; that stretch reads WVRQTPEKRLEWVA. The tract at residues 69-85 is complementarity-determining-2; sequence YISNGGGSTYYPDTVKG. Residues 86–117 form a framework-3 region; sequence RFTISRDNAKNNLYLQMSSLKSEDTAMYYCAR.

In Mus musculus (Mouse), this protein is Ig heavy chain V region 5-84.